We begin with the raw amino-acid sequence, 477 residues long: Tripartite motif-containing protein 72 (477 aa).

Residues C14, C17, C29, H31, C34, C37, C53, C56, C86, H89, C97, D100, C105, C108, H114, and H117 each coordinate Zn(2+). The segment at 14–57 adopts an RING-type zinc-finger fold; it reads CPLCLQLFDAPVTAECGHSFCRACLSRVAGEPAADGTVNCPCCQ. The segment at 81–122 adopts a B box-type zinc-finger fold; it reads VPQGHCEEHLDPLSIYCEQDRVLVCGVCASLGSHRGHRLLPA. The stretch at 135–232 forms a coiled coil; it reads QQKLQLQEAS…EKVLEEVADK (98 aa). S255 carries the phosphoserine modification. The B30.2/SPRY domain occupies 271-475; the sequence is DFKFQVWRKM…PLLLVGPDGQ (205 aa).

Belongs to the TRIM/RBCC family. As to quaternary structure, homodimer. Homooligomer; disulfide-linked. Oligomerizes on the phospholipid membrane. Interacts with DYSF and CAV3. In terms of processing, disulfide bond formation at Cys-242 occurs in case of membrane damage that cause the entry of the oxidized milieu of the extracellular space, resulting in homooligomerization. As to expression, muscle-specific.

The protein localises to the cell membrane. Its subcellular location is the sarcolemma. The protein resides in the cytoplasmic vesicle membrane. It carries out the reaction S-ubiquitinyl-[E2 ubiquitin-conjugating enzyme]-L-cysteine + [acceptor protein]-L-lysine = [E2 ubiquitin-conjugating enzyme]-L-cysteine + N(6)-ubiquitinyl-[acceptor protein]-L-lysine.. It participates in protein modification; protein ubiquitination. Its activity is regulated as follows. Specifically binds phosphatidylserine. The binding to phospholipids enhances ubiquitination activity. Functionally, muscle-specific E3 ubiquitin-protein ligase that plays a central role in cell membrane repair by nucleating the assembly of the repair machinery at injury sites. Its ubiquitination activity is mediated by E2 ubiquitin-conjugating enzymes UBE2D1, UBE2D2 and UBE2D3. Acts as a sensor of oxidation: upon membrane damage, entry of extracellular oxidative environment results in disulfide bond formation and homooligomerization at the injury site. This oligomerization acts as a nucleation site for recruitment of TRIM72-containing vesicles to the injury site, leading to membrane patch formation. Probably acts upstream of the Ca(2+)-dependent membrane resealing process. Required for transport of DYSF to sites of cell injury during repair patch formation. Regulates membrane budding and exocytosis. May be involved in the regulation of the mobility of KCNB1-containing endocytic vesicles. This is Tripartite motif-containing protein 72 from Oryctolagus cuniculus (Rabbit).